A 266-amino-acid polypeptide reads, in one-letter code: Hemin import ATP-binding protein HmuV (266 aa).

One can recognise an ABC transporter domain in the interval 12 to 248; sequence LEANQLSYHV…ETLTRWYQAD (237 aa). 44–51 provides a ligand contact to ATP; it reads GPNGAGKS.

This sequence belongs to the ABC transporter superfamily. Heme (hemin) importer (TC 3.A.1.14.5) family. As to quaternary structure, the complex is composed of two ATP-binding proteins (HmuV), two transmembrane proteins (HmuU) and a solute-binding protein (HmuT).

The protein localises to the cell inner membrane. In terms of biological role, part of the ABC transporter complex HmuTUV involved in hemin import. Responsible for energy coupling to the transport system. The protein is Hemin import ATP-binding protein HmuV of Yersinia enterocolitica.